Consider the following 141-residue polypeptide: Hemoglobin subunit alpha (141 aa).

Positions 1–141 (VLSAADKSNV…VSTVLTSKYR (141 aa)) constitute a Globin domain. Serine 3 bears the Phosphoserine mark. An N6-succinyllysine mark is found at lysine 7 and lysine 11. Lysine 16 bears the N6-acetyllysine; alternate mark. Lysine 16 is modified (N6-succinyllysine; alternate). At tyrosine 24 the chain carries Phosphotyrosine. Serine 35 is subject to Phosphoserine. Lysine 40 bears the N6-succinyllysine mark. Phosphoserine is present on serine 49. Histidine 58 is a binding site for O2. Residue histidine 87 participates in heme b binding. Serine 102 is subject to Phosphoserine. Threonine 108 carries the post-translational modification Phosphothreonine. Phosphoserine is present on serine 124. Phosphothreonine occurs at positions 134 and 137. A Phosphoserine modification is found at serine 138.

This sequence belongs to the globin family. Heterotetramer of two alpha chains and two beta chains. Red blood cells.

Involved in oxygen transport from the lung to the various peripheral tissues. In terms of biological role, hemopressin acts as an antagonist peptide of the cannabinoid receptor CNR1. Hemopressin-binding efficiently blocks cannabinoid receptor CNR1 and subsequent signaling. This chain is Hemoglobin subunit alpha (HBA), found in Felis catus (Cat).